Here is a 215-residue protein sequence, read N- to C-terminus: Histidine biosynthesis bifunctional protein HisIE (215 aa).

A phosphoribosyl-AMP cyclohydrolase region spans residues 1 to 118 (MTKSISIEHL…YKNDVALLQI (118 aa)). The interval 119-215 (IPQVSAKIKE…HVEKEGQQRE (97 aa)) is phosphoribosyl-ATP pyrophosphohydrolase.

In the N-terminal section; belongs to the PRA-CH family. It in the C-terminal section; belongs to the PRA-PH family.

It is found in the cytoplasm. The catalysed reaction is 1-(5-phospho-beta-D-ribosyl)-ATP + H2O = 1-(5-phospho-beta-D-ribosyl)-5'-AMP + diphosphate + H(+). The enzyme catalyses 1-(5-phospho-beta-D-ribosyl)-5'-AMP + H2O = 1-(5-phospho-beta-D-ribosyl)-5-[(5-phospho-beta-D-ribosylamino)methylideneamino]imidazole-4-carboxamide. Its pathway is amino-acid biosynthesis; L-histidine biosynthesis; L-histidine from 5-phospho-alpha-D-ribose 1-diphosphate: step 2/9. The protein operates within amino-acid biosynthesis; L-histidine biosynthesis; L-histidine from 5-phospho-alpha-D-ribose 1-diphosphate: step 3/9. This Oceanobacillus iheyensis (strain DSM 14371 / CIP 107618 / JCM 11309 / KCTC 3954 / HTE831) protein is Histidine biosynthesis bifunctional protein HisIE.